The sequence spans 382 residues: Opsin-VA (382 aa).

The Extracellular segment spans residues Met-1 to Thr-35. The chain crosses the membrane as a helical span at residues Leu-36–Phe-56. Residues Arg-57–Tyr-67 lie on the Cytoplasmic side of the membrane. Residues Ile-68–Phe-88 traverse the membrane as a helical segment. Residues Leu-89–Cys-103 lie on the Extracellular side of the membrane. Residues Cys-103 and Cys-180 are joined by a disulfide bond. Residues Val-104–Leu-124 form a helical membrane-spanning segment. The Cytoplasmic portion of the chain corresponds to Ala-125–Ala-147. The helical transmembrane segment at Leu-148 to Trp-168 threads the bilayer. Residues Ser-169–Thr-193 are Extracellular-facing. The helical transmembrane segment at Phe-194 to Tyr-214 threads the bilayer. Topologically, residues Cys-215–Met-244 are cytoplasmic. Residues Val-245–Val-265 traverse the membrane as a helical segment. At Val-266–Ala-279 the chain is on the extracellular side. Residues Ala-280–Met-300 form a helical membrane-spanning segment. An N6-(retinylidene)lysine modification is found at Lys-287. Residues Asn-301–Met-382 are Cytoplasmic-facing. Over residues Arg-330 to Ala-346 the composition is skewed to polar residues. The disordered stretch occupies residues Arg-330–His-371. A compositionally biased stretch (basic and acidic residues) spans Ile-349–Ser-368.

This sequence belongs to the G-protein coupled receptor 1 family. Opsin subfamily. Expressed in a subset of retinal horizontal cells as well as in retinal ganglion cells.

It is found in the membrane. In Rutilus rutilus (Roach), this protein is Opsin-VA.